A 763-amino-acid polypeptide reads, in one-letter code: Ras and Rab interactor 1 (763 aa).

Met1 carries the post-translational modification N-acetylmethionine. A disordered region spans residues 1-52 (MEDPGETGAHPLGATNLNFVPGHQQKEKPSTDPLYDTPDTRGVQAGGSQQPA). Tyr35 bears the Phosphotyrosine; by ABL1 and ABL2 mark. An SH2 domain is found at 68 to 151 (WLQLRANAAA…QLICGYCRTR (84 aa)). Disordered stretches follow at residues 177–200 (LNTKDQQRPSEAPPIPRLKARSPQ), 238–273 (STETSSPLSPPAVPPPPVPVLPGTSSSQTERLPPRQ), and 301–331 (QEVDCCSPSSSEEEGSSGSPTTSPRLSRPRH). Residues Ser198, Ser246, Ser319, and Ser323 each carry the phosphoserine modification. Residues 245 to 257 (LSPPAVPPPPVPV) show a composition bias toward pro residues. The span at 316 to 326 (SSGSPTTSPRL) shows a compositional bias: low complexity. Ser340 is modified (phosphoserine; by PKD/PRKD1). Residues 445-587 (LSADGSLGRL…LSGLSQARAL (143 aa)) enclose the VPS9 domain. Ser598 carries the phosphoserine modification. A Ras-associating domain is found at 613–695 (FQHLLRVAYQ…GYLIYRRAER (83 aa)). At Arg681 the chain carries Omega-N-methylarginine. A disordered region spans residues 698–763 (TQGAVAEKAK…KAEGSQALEE (66 aa)). Basic and acidic residues predominate over residues 727–755 (REGKPRIAVDQEGKDQARGGHIGPEEQKA).

It belongs to the RIN (Ras interaction/interference) family. Interacts with the GTP-bound form of Ras proteins (NRAS, HRAS and KRAS). This interaction prevents the association between RAF1 and Ras. Interacts with 14-3-3 proteins YWHAB, YWHAE and YWHAZ when phosphorylated on Ser-340. Interacts with the SH3 domain of ABL1 and ABL2. Interacts with RAB5A. The interaction with Ras is probably regulated and antagonized by the interaction with 14-3-3 proteins. The interaction with 14-3-3 proteins is regulated by phosphorylation on Ser-340. Post-translationally, phosphorylated on tyrosine residues by ABL1 and ABL2. Phosphorylation at Ser-340 by PRKD1 induces interaction with 14-3-3 proteins. As to expression, highly expressed in brain. Weakly or no expressed in other tissues, except in testis, where it is expressed at intermediate level. In brain, it is mainly expressed in postnatal forebrain neurons in which it is localized in dendrites and colocalizes with Ras.

Its subcellular location is the cytoplasm. The protein resides in the membrane. It localises to the cytoskeleton. Its function is as follows. Ras effector protein, which may serve as an inhibitory modulator of neuronal plasticity in aversive memory formation. Can affect Ras signaling at different levels. First, by competing with RAF1 protein for binding to activated Ras. Second, by enhancing signaling from ABL1 and ABL2, which regulate cytoskeletal remodeling. Third, by activating RAB5A, possibly by functioning as a guanine nucleotide exchange factor (GEF) for RAB5A, by exchanging bound GDP for free GTP, and facilitating Ras-activated receptor endocytosis. In Mus musculus (Mouse), this protein is Ras and Rab interactor 1 (Rin1).